Reading from the N-terminus, the 510-residue chain is MTATPKPLVLIILDGFGHSESHKGNAILAAKMPVMDRLYQTMPNGLISGSGMDVGLPDGQMGNSEVGHMNLGAGRVVYQDFTRVTKAIRDGEFFENPTICAAVDKAVSAGKAVHIMGLLSDGGVHSHQDHLVAMAELAVKRGAEKIYLHAFLDGRDTPPRSAKKSLELMDATFARLGKGRTATIVGRYFAMDRDNRWDRVSSAYNLIVDSTADFHADSAVAGLEAAYARDENDEFVKATRIGEAARVEDGDAVVFMNFRADRARELTRVFVEDDFKDFERARQPKVNYVMLTQYAASIPAPSAFAAGSLKNVLGEYLADNGKTQLRIAETEKYAHVTFFFSGGREEPFPGEERILIPSPKVATYDLQPEMSAPEVTDKIVDAIEHQRYDVIVVNYANGDMVGHSGIMEAAIKAVECLDVCVGRIAEALEKVGGEALITADHGNVEQMTDDSTGQAHTAHTSEPVPFVYVGKRQLKVRQGGVLADVAPTMLHLLGMEKPQEMTGHSILVAE.

Mn(2+) contacts are provided by aspartate 14 and serine 64. The active-site Phosphoserine intermediate is serine 64. Substrate is bound by residues histidine 125, 155-156 (RD), arginine 187, arginine 193, 259-262 (RADR), and lysine 332. Mn(2+) is bound by residues aspartate 399, histidine 403, aspartate 440, histidine 441, and histidine 459.

It belongs to the BPG-independent phosphoglycerate mutase family. As to quaternary structure, monomer. Mn(2+) is required as a cofactor.

The catalysed reaction is (2R)-2-phosphoglycerate = (2R)-3-phosphoglycerate. It functions in the pathway carbohydrate degradation; glycolysis; pyruvate from D-glyceraldehyde 3-phosphate: step 3/5. Catalyzes the interconversion of 2-phosphoglycerate and 3-phosphoglycerate. This is 2,3-bisphosphoglycerate-independent phosphoglycerate mutase from Pseudomonas syringae pv. syringae (strain B728a).